The primary structure comprises 150 residues: MVKGSVTNTSSIVKQFEKSSIKHETETIAFAKQFINECIREFQEQKDNVVEEKNTDQNHQNQNQEGVIIEIYQELLQKVDLISSELRQNLSSLQLRFQEVERDTGHDLLNVLNSLSQEARLAQKVLEEDGSQQGSQLIQGLLTCFQSTGN.

Serine 11 is subject to Phosphoserine.

In terms of assembly, component of linear elements (LinEs), which are similar to synaptonemal complexes, at least composed of rec27, rec25, rec10 and mug20. Interacts with rec10; the interaction is direct.

It is found in the cytoplasm. Its subcellular location is the nucleus. The protein localises to the chromosome. Functionally, during meiotic DNA recombination, binds to and may help activate DNA double-strand break (DSB) hotspot sites. In Schizosaccharomyces pombe (strain 972 / ATCC 24843) (Fission yeast), this protein is Linear element protein rec25.